Here is a 111-residue protein sequence, read N- to C-terminus: BET1-like protein (111 aa).

Residues 1-86 (MADWTRAQSS…VARSGRDTRK (86 aa)) lie on the Cytoplasmic side of the membrane. A phosphoserine mark is found at Ser9 and Ser37. Residues 15 to 77 (EIVDRENKRM…TGSVKRFSTV (63 aa)) form the t-SNARE coiled-coil homology domain. The chain crosses the membrane as a helical; Anchor for type IV membrane protein span at residues 87-107 (LLCGMAVVLIVAFFILSYLFS). The Vesicular segment spans residues 108 to 111 (RTRT).

In terms of assembly, component of a SNARE complex consisting of STX5, YKT6, GOSR1 and BET1L. Interacts with STX5. As to expression, widely expressed. Highest levels in heart, liver, skeletal muscle and kidney.

The protein localises to the golgi apparatus membrane. It localises to the golgi apparatus. Its subcellular location is the trans-Golgi network membrane. Functionally, vesicle SNARE required for targeting and fusion of retrograde transport vesicles with the Golgi complex. Required for the integrity of the Golgi complex. The polypeptide is BET1-like protein (Rattus norvegicus (Rat)).